The sequence spans 474 residues: Stabilizer of axonemal microtubules 1 (474 aa).

12 mn regions span residues 30-64, 65-97, 98-131, 132-165, 166-199, 200-232, 233-266, 267-299, 300-332, 333-366, 367-400, and 401-434; these read KPCLLSEYTENYPFYHSYLPRESFKPRREYQKGPI, PMEGLTTSRRDFGPHKVAPVKVHQYDQFVPSEE, NMDLLTTYKKDYNPYPVCRVDPIKPRDSKYPCSD, KMECLPTYKADYLPWNQPRREPLRLEHKYQPASV, RFDNRTTHQDDYPIKGLVKTISCKPLAMPKLCNI, PLEDVTNYKMSYVAHPVEKRFVHEAEKFRPCEI, PFESLTTQKQSYRGLMGEPAKSLKPLARPPGLDM, PFCNTTEFRDKYQAWPMPRMFSKAPITYVPPED, RMDLLTTVQAHYTCPKGAPAQSCRPALQIKKCG, RFEGSSTTKDDYKQWSSMRTEPVKPVPQLDLPTE, PLDCLTTTRAHYVPHLPINTKSCKPHWSGPRGNV, and PVESQTTYTISFTPKEMGRCLASYPEPPGYTFEE. The interval 446–474 is disordered; that stretch reads VSQAGSQQSSHLSVDDSENPNQRELEVLA. The segment covering 448–457 has biased composition (polar residues); that stretch reads QAGSQQSSHL.

Belongs to the FAM154 family. Associates with microtubules via the Mn regions. In terms of tissue distribution, widely expressed, with highest levels in testis. Expressed in mature spermatozoa (at protein level).

The protein localises to the cytoplasm. It is found in the cytoskeleton. Its subcellular location is the microtubule organizing center. It localises to the centrosome. The protein resides in the centriole. The protein localises to the cilium basal body. It is found in the cilium axoneme. Its subcellular location is the flagellum axoneme. Its function is as follows. May play a role in the regulation of cilium length. Stabilizes microtubules at low temperature. The protein is Stabilizer of axonemal microtubules 1 (SAXO1) of Homo sapiens (Human).